The following is a 716-amino-acid chain: Protein Hook homolog 2 (716 aa).

The interval 1 to 161 (MSVDKAELCG…ELMTKDTPDS (161 aa)) is required for localization to the centrosome and induction of aggresome formation. The interval 1–546 (MSVDKAELCG…LKRKLEDHLQ (546 aa)) is sufficient for interaction with microtubules. The 117-residue stretch at 6–122 (AELCGSLLTW…KLLQLVLGCA (117 aa)) folds into the Calponin-homology (CH) domain. S163 bears the Phosphoserine mark. Coiled coils occupy residues 188 to 427 (DHLQ…AQLQ) and 455 to 605 (AELR…VDKA). The tract at residues 533 to 716 (DPTLLKRKLE…ALSLRPTDKH (184 aa)) is required for localization to the centrosome and induction of aggresome formation. Positions 582–716 (DSLQKKDADL…ALSLRPTDKH (135 aa)) are sufficient for interaction with CNTRL.

It belongs to the hook family. As to quaternary structure, self-associates. Component of the FTS/Hook/FHIP complex (FHF complex), composed of AKTIP/FTS, FHIP1B, and one or more members of the Hook family of proteins HOOK1, HOOK2, and HOOK3. May interact directly with AKTIP/FTS, HOOK1 and HOOK3. Associates with several subunits of the homotypic vesicular sorting complex (the HOPS complex) including VPS16 and VPS41; these interactions may be indirect. Interacts with CNTRL. Interacts with microtubules. Interacts with ZC3H14. Interacts with LRGUK (via guanylate kinase-like domain). Interacts with CCDC181. Interacts with AP4M1; the interaction is direct, mediates the interaction between FTS-Hook-FHIP (FHF) complex and AP-4 and the perinuclear distribution of AP-4. In terms of tissue distribution, expressed in brain, cerebellum, kidney, liver and heart, with highest levels in heart and kidney (at protein level).

It is found in the cytoplasm. The protein resides in the cytoskeleton. It localises to the microtubule organizing center. Its subcellular location is the centrosome. The protein localises to the golgi apparatus. It is found in the trans-Golgi network. Functionally, component of the FTS/Hook/FHIP complex (FHF complex). The FHF complex may function to promote vesicle trafficking and/or fusion via the homotypic vesicular protein sorting complex (the HOPS complex). Contributes to the establishment and maintenance of centrosome function. May function in the positioning or formation of aggresomes, which are pericentriolar accumulations of misfolded proteins, proteasomes and chaperones. FHF complex promotes the distribution of AP-4 complex to the perinuclear area of the cell. This Mus musculus (Mouse) protein is Protein Hook homolog 2 (Hook2).